A 260-amino-acid chain; its full sequence is Major prion protein (260 aa).

The signal sequence occupies residues 1 to 22 (MANLGCWMLVLFVATWSDLGLC). The tract at residues 23-237 (KKRPKPGGWN…ESQAYYQRGS (215 aa)) is interaction with GRB2, ERI3 and SYN1. The segment at 26-112 (PKPGGWNTGG…HNQWNKPSKP (87 aa)) is disordered. Repeat copies occupy residues 51–58 (PQGGGWGQ), 59–66 (PHGGGWGQ), 67–74 (PHGGGWGQ), 75–82 (PHGGGWGQ), 83–90 (PHGGGWGQ), and 91–98 (PHGGGWGQ). Residues 51–98 (PQGGGWGQPHGGGWGQPHGGGWGQPHGGGWGQPHGGGWGQPHGGGWGQ) are 6 X 8 AA tandem repeats of P-H-G-G-G-W-G-Q. Residues 52–102 (QGGGWGQPHGGGWGQPHGGGWGQPHGGGWGQPHGGGWGQPHGGGWGQGGGT) are compositionally biased toward gly residues. Histidine 68, glycine 69, glycine 70, histidine 76, glycine 77, glycine 78, histidine 84, glycine 85, glycine 86, histidine 92, glycine 93, and glycine 94 together coordinate Cu(2+). A disulfide bridge connects residues cysteine 186 and cysteine 221. N-linked (GlcNAc...) asparagine glycans are attached at residues asparagine 188 and asparagine 204. Serine 237 carries the GPI-anchor amidated serine lipid modification. Residues 238–260 (SMVLFSSPPVILLISFLIFLIVG) constitute a propeptide, removed in mature form.

Belongs to the prion family. As to quaternary structure, monomer and homodimer. Has a tendency to aggregate into amyloid fibrils containing a cross-beta spine, formed by a steric zipper of superposed beta-strands. Soluble oligomers may represent an intermediate stage on the path to fibril formation. Copper binding may promote oligomerization. Interacts with GRB2, APP, ERI3/PRNPIP and SYN1. Mislocalized cytosolically exposed PrP interacts with MGRN1; this interaction alters MGRN1 subcellular location and causes lysosomal enlargement. Interacts with KIAA1191.

Its subcellular location is the cell membrane. It localises to the golgi apparatus. Functionally, its primary physiological function is unclear. Has cytoprotective activity against internal or environmental stresses. May play a role in neuronal development and synaptic plasticity. May be required for neuronal myelin sheath maintenance. May play a role in iron uptake and iron homeostasis. Soluble oligomers are toxic to cultured neuroblastoma cells and induce apoptosis (in vitro). Association with GPC1 (via its heparan sulfate chains) targets PRNP to lipid rafts. Also provides Cu(2+) or Zn(2+) for the ascorbate-mediated GPC1 deaminase degradation of its heparan sulfate side chains. This chain is Major prion protein (PRNP), found in Saimiri sciureus (Common squirrel monkey).